Consider the following 313-residue polypeptide: Ribosomal protein uL3 glutamine methyltransferase (313 aa).

The protein belongs to the protein N5-glutamine methyltransferase family. PrmB subfamily.

The catalysed reaction is L-glutaminyl-[ribosomal protein uL3] + S-adenosyl-L-methionine = N(5)-methyl-L-glutaminyl-[ribosomal protein uL3] + S-adenosyl-L-homocysteine + H(+). Functionally, methylates large ribosomal subunit protein uL3 on a specific glutamine residue. In Pasteurella multocida (strain Pm70), this protein is Ribosomal protein uL3 glutamine methyltransferase.